The sequence spans 106 residues: uncharacterized protein (106 aa).

A signal peptide spans 1-31 (MKKKTKIILSLLAALIVILIVLPVLSPVVFT).

This is an uncharacterized protein from Bacillus subtilis (strain 168).